The sequence spans 156 residues: Small ribosomal subunit protein uS7 (156 aa).

It belongs to the universal ribosomal protein uS7 family. Part of the 30S ribosomal subunit. Contacts proteins S9 and S11.

Its function is as follows. One of the primary rRNA binding proteins, it binds directly to 16S rRNA where it nucleates assembly of the head domain of the 30S subunit. Is located at the subunit interface close to the decoding center, probably blocks exit of the E-site tRNA. This is Small ribosomal subunit protein uS7 from Rhizobium rhizogenes (strain K84 / ATCC BAA-868) (Agrobacterium radiobacter).